An 835-amino-acid polypeptide reads, in one-letter code: Lon protease (835 aa).

One can recognise a Lon N-terminal domain in the interval 4–224 (LPYIAIRNQL…LAINMLINAI (221 aa)). Residue 412–419 (GPPGTGKT) participates in ATP binding. Residues 649–832 (QPKAGVVNAL…DEIFKYIFEA (184 aa)) form the Lon proteolytic domain. Residues Ser738 and Lys781 contribute to the active site.

It belongs to the peptidase S16 family. As to quaternary structure, homohexamer. Organized in a ring with a central cavity.

Its subcellular location is the cytoplasm. It carries out the reaction Hydrolysis of proteins in presence of ATP.. Its function is as follows. ATP-dependent serine protease that mediates the selective degradation of mutant and abnormal proteins as well as certain short-lived regulatory proteins. Required for cellular homeostasis and for survival from DNA damage and developmental changes induced by stress. Degrades polypeptides processively to yield small peptide fragments that are 5 to 10 amino acids long. Binds to DNA in a double-stranded, site-specific manner. This chain is Lon protease, found in Metamycoplasma arthritidis (strain 158L3-1) (Mycoplasma arthritidis).